A 214-amino-acid polypeptide reads, in one-letter code: Ornithine decarboxylase antizyme 1 (214 aa).

Belongs to the ODC antizyme family. In terms of assembly, interacts with ODC1 and thereby sterically blocks ODC homodimerization.

Functionally, ornithine decarboxylase (ODC) antizyme protein that negatively regulates ODC activity and intracellular polyamine biosynthesis and uptake in response to increased intracellular polyamine levels. Binds to ODC monomers, inhibiting the assembly of the functional ODC homodimer, and targets the monomers for ubiquitin-independent proteolytic destruction by the 26S proteasome. This is Ornithine decarboxylase antizyme 1 (oaz1a) from Danio rerio (Zebrafish).